The primary structure comprises 1487 residues: Murinoglobulin-1 (1487 aa).

Residues 1-24 (MKKNREAQLCLFSALLAFLPFASL) form the signal peptide. Cysteines 48 and 86 form a disulfide. N-linked (GlcNAc...) asparagine glycosylation is found at asparagine 55 and asparagine 247. 2 cysteine pairs are disulfide-bonded: cysteine 251/cysteine 283 and cysteine 269/cysteine 295. N-linked (GlcNAc...) asparagine glycans are attached at residues asparagine 301, asparagine 321, asparagine 393, and asparagine 508. Intrachain disulfides connect cysteine 468–cysteine 563, cysteine 595–cysteine 784, and cysteine 643–cysteine 689. The bait region stretch occupies residues 686 to 745 (PTYCYEMNMVVLSAPAVESELSPRGGEFEMMPLGVNKSPLPKEPPRKDPPPKDPVIETIR). 3 N-linked (GlcNAc...) asparagine glycosylation sites follow: asparagine 760, asparagine 787, and asparagine 882. 4 disulfides stabilise this stretch: cysteine 860–cysteine 896, cysteine 934–cysteine 1334, cysteine 1092–cysteine 1140, and cysteine 1365–cysteine 1480. Residues 985–988 (CGEQ) constitute a cross-link (isoglutamyl cysteine thioester (Cys-Gln)). N-linked (GlcNAc...) asparagine glycosylation is present at asparagine 1004. Asparagine 1153, asparagine 1324, and asparagine 1437 each carry an N-linked (GlcNAc...) asparagine glycan.

This sequence belongs to the protease inhibitor I39 (alpha-2-macroglobulin) family. In terms of assembly, monomer. In terms of tissue distribution, plasma.

It localises to the secreted. Functionally, a proteinase activates the inhibitor by specific proteolysis in the bait region, which, by an unknown mechanism leads to reaction at the cysteinyl-glutamyl internal thiol ester site and to a conformational change, whereby the proteinase is trapped and/or covalently bound to the inhibitor. While in the tetrameric proteinase inhibitors steric inhibition is sufficiently strong, monomeric forms need a covalent linkage between the activated glutamyl residue of the original thiol ester and a terminal amino group of a lysine or another nucleophilic group on the proteinase, for inhibition to be effective. The protein is Murinoglobulin-1 of Rattus norvegicus (Rat).